The primary structure comprises 291 residues: UPF0276 protein VV1_0952 (291 aa).

The protein belongs to the UPF0276 family.

The protein is UPF0276 protein VV1_0952 of Vibrio vulnificus (strain CMCP6).